The following is a 632-amino-acid chain: tRNA uridine 5-carboxymethylaminomethyl modification enzyme MnmG (632 aa).

Residues 15 to 20 (GAGHAG), isoleucine 127, and serine 182 contribute to the FAD site. An NAD(+)-binding site is contributed by 276–290 (GPRYCPSIEDKIVRF). FAD is bound at residue glutamine 373.

This sequence belongs to the MnmG family. As to quaternary structure, homodimer. Heterotetramer of two MnmE and two MnmG subunits. FAD is required as a cofactor.

The protein localises to the cytoplasm. In terms of biological role, NAD-binding protein involved in the addition of a carboxymethylaminomethyl (cmnm) group at the wobble position (U34) of certain tRNAs, forming tRNA-cmnm(5)s(2)U34. The polypeptide is tRNA uridine 5-carboxymethylaminomethyl modification enzyme MnmG (Streptococcus pyogenes serotype M18 (strain MGAS8232)).